A 279-amino-acid polypeptide reads, in one-letter code: Tryptophan synthase alpha chain (279 aa).

Active-site proton acceptor residues include Glu50 and Asp61.

The protein belongs to the TrpA family. Tetramer of two alpha and two beta chains.

The catalysed reaction is (1S,2R)-1-C-(indol-3-yl)glycerol 3-phosphate + L-serine = D-glyceraldehyde 3-phosphate + L-tryptophan + H2O. The protein operates within amino-acid biosynthesis; L-tryptophan biosynthesis; L-tryptophan from chorismate: step 5/5. Its function is as follows. The alpha subunit is responsible for the aldol cleavage of indoleglycerol phosphate to indole and glyceraldehyde 3-phosphate. This is Tryptophan synthase alpha chain from Sinorhizobium medicae (strain WSM419) (Ensifer medicae).